The primary structure comprises 127 residues: Ribonuclease P protein component (127 aa).

This sequence belongs to the RnpA family. In terms of assembly, consists of a catalytic RNA component (M1 or rnpB) and a protein subunit.

It carries out the reaction Endonucleolytic cleavage of RNA, removing 5'-extranucleotides from tRNA precursor.. Its function is as follows. RNaseP catalyzes the removal of the 5'-leader sequence from pre-tRNA to produce the mature 5'-terminus. It can also cleave other RNA substrates such as 4.5S RNA. The protein component plays an auxiliary but essential role in vivo by binding to the 5'-leader sequence and broadening the substrate specificity of the ribozyme. The protein is Ribonuclease P protein component of Prochlorococcus marinus (strain SARG / CCMP1375 / SS120).